A 679-amino-acid chain; its full sequence is Glycine--tRNA ligase beta subunit (679 aa).

This sequence belongs to the class-II aminoacyl-tRNA synthetase family. In terms of assembly, tetramer of two alpha and two beta subunits.

The protein resides in the cytoplasm. It catalyses the reaction tRNA(Gly) + glycine + ATP = glycyl-tRNA(Gly) + AMP + diphosphate. The sequence is that of Glycine--tRNA ligase beta subunit from Streptococcus pyogenes serotype M3 (strain ATCC BAA-595 / MGAS315).